The primary structure comprises 432 residues: MQLLTIGINHHTAPVALRERVAFPLEQIKPALVTFKNVFLGPHAPNAPEAAILSTCNRTELYCATDDRAAREGAIRWLSEYHRISVDELAPHVYALPQSEAVRHAFRVASGLDSMVLGETQILGQMKDAVRTATEAGALGTYLNQLFQRTFAVAKEVRGTTEIGAQSVSMAAAAVRLAQRIFETVSDQRVLFIGAGEMIELCATHFAAQSPRELVIANRTAERGQRLAERFNGRAMPLSDLPTRMHEFDIIVSCTASTLPIIGLGAVERAVKARRHRPIFMVDLAVPRDIEPEVGKLKDVFLYTVDDLGAIVREGNASRQAAVAQAETIIETRVQNFMQWLDTRSVVPVIRHMHTQADALRRAEVEKAQKLLARGDDPAAVLEALSQALTNKLIHGPTSALNRVNGADRDSLIDLMRGFYQHAPRSNDQSGH.

Substrate contacts are provided by residues 55–58 (TCNR), S114, 119–121 (ETQ), and Q125. C56 functions as the Nucleophile in the catalytic mechanism. An NADP(+)-binding site is contributed by 194–199 (GAGEMI).

Belongs to the glutamyl-tRNA reductase family. As to quaternary structure, homodimer.

The enzyme catalyses (S)-4-amino-5-oxopentanoate + tRNA(Glu) + NADP(+) = L-glutamyl-tRNA(Glu) + NADPH + H(+). The protein operates within porphyrin-containing compound metabolism; protoporphyrin-IX biosynthesis; 5-aminolevulinate from L-glutamyl-tRNA(Glu): step 1/2. In terms of biological role, catalyzes the NADPH-dependent reduction of glutamyl-tRNA(Glu) to glutamate 1-semialdehyde (GSA). This chain is Glutamyl-tRNA reductase, found in Burkholderia ambifaria (strain ATCC BAA-244 / DSM 16087 / CCUG 44356 / LMG 19182 / AMMD) (Burkholderia cepacia (strain AMMD)).